The sequence spans 138 residues: Large ribosomal subunit protein uL16 (138 aa).

Residues 1-17 show a composition bias toward basic residues; sequence MLIPRKVKHRKQHHPRQ. The segment at 1-24 is disordered; that stretch reads MLIPRKVKHRKQHHPRQRGIASGG.

It belongs to the universal ribosomal protein uL16 family. As to quaternary structure, part of the 50S ribosomal subunit.

Its function is as follows. Binds 23S rRNA and is also seen to make contacts with the A and possibly P site tRNAs. This Mycolicibacterium gilvum (strain PYR-GCK) (Mycobacterium gilvum (strain PYR-GCK)) protein is Large ribosomal subunit protein uL16.